We begin with the raw amino-acid sequence, 865 residues long: Leucine--tRNA ligase (865 aa).

The 'HIGH' region motif lies at 58-68 (PYPSGNLHMGH). The 'KMSKS' region signature appears at 629-633 (KMSKS). Residue Lys632 coordinates ATP.

Belongs to the class-I aminoacyl-tRNA synthetase family.

The protein localises to the cytoplasm. It catalyses the reaction tRNA(Leu) + L-leucine + ATP = L-leucyl-tRNA(Leu) + AMP + diphosphate. The protein is Leucine--tRNA ligase of Synechococcus elongatus (strain ATCC 33912 / PCC 7942 / FACHB-805) (Anacystis nidulans R2).